A 78-amino-acid chain; its full sequence is Large ribosomal subunit protein bL28 (78 aa).

The tract at residues 1–23 (MSRVCQVTGKKPMVGNNRSHAKN) is disordered.

It belongs to the bacterial ribosomal protein bL28 family.

The protein is Large ribosomal subunit protein bL28 of Shewanella sediminis (strain HAW-EB3).